The following is a 98-amino-acid chain: uncharacterized protein (98 aa).

This is an uncharacterized protein from Ureaplasma parvum serovar 3 (strain ATCC 700970).